A 329-amino-acid chain; its full sequence is 36 kDa antigen (329 aa).

A helical membrane pass occupies residues 11–31 (AILTGGGALLLGLIVLFYLAY).

This sequence belongs to the membrane fusion protein (MFP) (TC 8.A.1) family.

It is found in the membrane. The sequence is that of 36 kDa antigen from Helicobacter pylori (strain J99 / ATCC 700824) (Campylobacter pylori J99).